A 188-amino-acid chain; its full sequence is Elongation factor P (188 aa).

It belongs to the elongation factor P family.

The protein localises to the cytoplasm. It participates in protein biosynthesis; polypeptide chain elongation. In terms of biological role, involved in peptide bond synthesis. Stimulates efficient translation and peptide-bond synthesis on native or reconstituted 70S ribosomes in vitro. Probably functions indirectly by altering the affinity of the ribosome for aminoacyl-tRNA, thus increasing their reactivity as acceptors for peptidyl transferase. In Parabacteroides distasonis (strain ATCC 8503 / DSM 20701 / CIP 104284 / JCM 5825 / NCTC 11152), this protein is Elongation factor P.